A 267-amino-acid chain; its full sequence is Phosphonates import ATP-binding protein PhnC 1 (267 aa).

Positions 3–247 (LSLDGVDLVH…ALDALYANEQ (245 aa)) constitute an ABC transporter domain. An ATP-binding site is contributed by 36–43 (GPSGAGKT).

This sequence belongs to the ABC transporter superfamily. Phosphonates importer (TC 3.A.1.9.1) family. The complex is composed of two ATP-binding proteins (PhnC), two transmembrane proteins (PhnE) and a solute-binding protein (PhnD).

The protein resides in the cell inner membrane. The catalysed reaction is phosphonate(out) + ATP + H2O = phosphonate(in) + ADP + phosphate + H(+). Part of the ABC transporter complex PhnCDE involved in phosphonates import. Responsible for energy coupling to the transport system. This is Phosphonates import ATP-binding protein PhnC 1 from Pseudomonas aeruginosa (strain ATCC 15692 / DSM 22644 / CIP 104116 / JCM 14847 / LMG 12228 / 1C / PRS 101 / PAO1).